We begin with the raw amino-acid sequence, 507 residues long: ATP synthase subunit alpha, chloroplastic (507 aa).

An ATP-binding site is contributed by 170-177 (GDRQTGKT).

The protein belongs to the ATPase alpha/beta chains family. F-type ATPases have 2 components, CF(1) - the catalytic core - and CF(0) - the membrane proton channel. CF(1) has five subunits: alpha(3), beta(3), gamma(1), delta(1), epsilon(1). CF(0) has four main subunits: a, b, b' and c.

It is found in the plastid. Its subcellular location is the chloroplast thylakoid membrane. It catalyses the reaction ATP + H2O + 4 H(+)(in) = ADP + phosphate + 5 H(+)(out). Its function is as follows. Produces ATP from ADP in the presence of a proton gradient across the membrane. The alpha chain is a regulatory subunit. The sequence is that of ATP synthase subunit alpha, chloroplastic from Eucalyptus globulus subsp. globulus (Tasmanian blue gum).